Here is a 309-residue protein sequence, read N- to C-terminus: Serine/threonine-protein phosphatase 2A catalytic subunit alpha isoform (309 aa).

Positions 57, 59, 85, and 117 each coordinate Mn(2+). Residues aspartate 57, histidine 59, and aspartate 85 each contribute to the Zn(2+) site. Fe(3+) is bound by residues aspartate 85 and asparagine 117. Histidine 118 (proton donor) is an active-site residue. Histidine 167 and histidine 241 together coordinate Mn(2+). Fe(3+) contacts are provided by histidine 167 and histidine 241. Position 307 is a phosphotyrosine (tyrosine 307). Leucine 309 carries the leucine methyl ester modification.

This sequence belongs to the PPP phosphatase family. PP-1 subfamily. In terms of assembly, PP2A consists of a common heterodimeric core enzyme, composed of PPP2CA, a 36 kDa catalytic subunit (subunit C), and PPP2R1A, a 65 kDa constant regulatory subunit (PR65 or subunit A), that associates with a variety of regulatory subunits. Proteins that associate with the core dimer include three families of regulatory subunits B (the R2/B/PR55/B55, R3/B''/PR72/PR130/PR59 and R5/B'/B56 families), the 48 kDa variable regulatory subunit, viral proteins, and cell signaling molecules. May indirectly interact with SGOL1, most probably through regulatory B56 subunits. Phosphatase component of the Integrator-PP2A (INTAC) complex, composed of the Integrator core complex and protein phosphatase 2A subunits PPP2CA and PPP2R1A. Mn(2+) is required as a cofactor. It depends on Fe(3+) as a cofactor. The cofactor is Zn(2+). Post-translationally, reversibly methyl esterified on Leu-309 by leucine carboxyl methyltransferase 1 (LCMT1) and protein phosphatase methylesterase 1 (PPME1). Carboxyl methylation influences the affinity of the catalytic subunit for the different regulatory subunits, thereby modulating the PP2A holoenzyme's substrate specificity, enzyme activity and cellular localization. Phosphorylation of either threonine (by autophosphorylation-activated protein kinase) or tyrosine results in inactivation of the phosphatase. Auto-dephosphorylation has been suggested as a mechanism for reactivation.

Its subcellular location is the cytoplasm. The protein localises to the nucleus. The protein resides in the chromosome. It localises to the centromere. It is found in the cytoskeleton. Its subcellular location is the spindle pole. The enzyme catalyses O-phospho-L-seryl-[protein] + H2O = L-seryl-[protein] + phosphate. It carries out the reaction O-phospho-L-threonyl-[protein] + H2O = L-threonyl-[protein] + phosphate. With respect to regulation, inhibited by the interaction between PPP2R2A and ARPP19; this inhibition is enhanced when ARPP19 is phosphorylated. Inhibited by the interaction between PPP2R2A and PABIR1/FAM122A. PP2A is the major phosphatase for microtubule-associated proteins (MAPs). PP2A can modulate the activity of phosphorylase B kinase casein kinase 2, mitogen-stimulated S6 kinase, and MAP-2 kinase. Key mediator of a quality checkpoint during transcription elongation as part of the Integrator-PP2A (INTAC) complex. The INTAC complex drives premature transcription termination of transcripts that are unfavorably configured for transcriptional elongation: within the INTAC complex, PPP2CA catalyzes dephosphorylation of the C-terminal domain (CTD) of Pol II subunit POLR2A/RPB1 and SUPT5H/SPT5, thereby preventing transcriptional elongation. This Gallus gallus (Chicken) protein is Serine/threonine-protein phosphatase 2A catalytic subunit alpha isoform (PPP2CA).